Reading from the N-terminus, the 209-residue chain is Uracil phosphoribosyltransferase (209 aa).

Residues Arg79, Arg104, and 131–139 each bind 5-phospho-alpha-D-ribose 1-diphosphate; that span reads DPMLATGGS. Uracil is bound by residues Ile194 and 199–201; that span reads GDA. Residue Asp200 participates in 5-phospho-alpha-D-ribose 1-diphosphate binding.

Belongs to the UPRTase family. The cofactor is Mg(2+).

It catalyses the reaction UMP + diphosphate = 5-phospho-alpha-D-ribose 1-diphosphate + uracil. The protein operates within pyrimidine metabolism; UMP biosynthesis via salvage pathway; UMP from uracil: step 1/1. With respect to regulation, allosterically activated by GTP. Its function is as follows. Catalyzes the conversion of uracil and 5-phospho-alpha-D-ribose 1-diphosphate (PRPP) to UMP and diphosphate. The polypeptide is Uracil phosphoribosyltransferase (Geobacter sp. (strain M21)).